A 472-amino-acid polypeptide reads, in one-letter code: MSQSLFSQPLNVINVGIAMFSDDLKKQHVEVTQLDWTPPGQGNMQVVQALDNIADSPLADKIAAANQQALERIIQSHPVLIGFDQAINVVPGMTAKTILHAGPPITWEKMCGAMKGAVTGALVFEGLAKDLDEAAELAASGEITFSPCHEHDCVGSMAGVTSASMFMHIVKNKTYGNIAYTNMSEQMAKILRMGANDQSVIDRLNWMRDVQGPILRDAMKIIGEIDLRLMLAQALHMGDECHNRNNAGTTLLIQALTPGIIQAGYSVEQQREVFEFVASSDYFSGPTWMAMCKAAMDAAHGIEYSTVVTTMARNGVEFGLRVSGLPGQWFTGPAQQVIGPMFAGYKPEDSGLDIGDSAITETYGIGGFAMATAPAIVALVGGTVEEAIDFSRQMREITLGENPNVTIPLLGFMGVPSAIDITRVGSSGILPVINTAIAHKDAGVGMIGAGIVHPPFACFEKAILGWCERYGV.

Belongs to the AllG family.

This is an uncharacterized protein from Escherichia coli (strain K12).